A 212-amino-acid chain; its full sequence is Ribosomal RNA small subunit methyltransferase G (212 aa).

S-adenosyl-L-methionine-binding positions include Gly73, Phe78, 124 to 125 (IE), and Arg137.

The protein belongs to the methyltransferase superfamily. RNA methyltransferase RsmG family.

The protein localises to the cytoplasm. Specifically methylates the N7 position of a guanine in 16S rRNA. This chain is Ribosomal RNA small subunit methyltransferase G, found in Karelsulcia muelleri (strain GWSS) (Sulcia muelleri).